Consider the following 149-residue polypeptide: Putative glycine cleavage system H protein 3 (149 aa).

The Lipoyl-binding domain occupies 39–121; it reads TCTLGITKYA…EDKGWLIKME (83 aa). Position 80 is an N6-lipoyllysine (K80).

It belongs to the GcvH family. In terms of assembly, the glycine cleavage system is composed of four proteins: P, T, L and H. It depends on (R)-lipoate as a cofactor.

In terms of biological role, the glycine cleavage system catalyzes the degradation of glycine. The H protein shuttles the methylamine group of glycine from the P protein to the T protein. This Dictyostelium discoideum (Social amoeba) protein is Putative glycine cleavage system H protein 3 (gcvH3).